Consider the following 354-residue polypeptide: UDP-N-acetylglucosamine--N-acetylmuramyl-(pentapeptide) pyrophosphoryl-undecaprenol N-acetylglucosamine transferase (354 aa).

UDP-N-acetyl-alpha-D-glucosamine-binding positions include 11–13 (TAG), Arg-164, Ser-194, and Gln-289.

It belongs to the glycosyltransferase 28 family. MurG subfamily.

The protein resides in the cell membrane. The enzyme catalyses di-trans,octa-cis-undecaprenyl diphospho-N-acetyl-alpha-D-muramoyl-L-alanyl-D-glutamyl-meso-2,6-diaminopimeloyl-D-alanyl-D-alanine + UDP-N-acetyl-alpha-D-glucosamine = di-trans,octa-cis-undecaprenyl diphospho-[N-acetyl-alpha-D-glucosaminyl-(1-&gt;4)]-N-acetyl-alpha-D-muramoyl-L-alanyl-D-glutamyl-meso-2,6-diaminopimeloyl-D-alanyl-D-alanine + UDP + H(+). It functions in the pathway cell wall biogenesis; peptidoglycan biosynthesis. Cell wall formation. Catalyzes the transfer of a GlcNAc subunit on undecaprenyl-pyrophosphoryl-MurNAc-pentapeptide (lipid intermediate I) to form undecaprenyl-pyrophosphoryl-MurNAc-(pentapeptide)GlcNAc (lipid intermediate II). In Lachnospira eligens (strain ATCC 27750 / DSM 3376 / VPI C15-48 / C15-B4) (Eubacterium eligens), this protein is UDP-N-acetylglucosamine--N-acetylmuramyl-(pentapeptide) pyrophosphoryl-undecaprenol N-acetylglucosamine transferase.